The following is a 59-amino-acid chain: Cuticle protein 7 isoform b (59 aa).

Gln1 is modified (pyrrolidone carboxylic acid).

The protein is Cuticle protein 7 isoform b of Limulus polyphemus (Atlantic horseshoe crab).